A 359-amino-acid chain; its full sequence is Peptide chain release factor 1 (359 aa).

An N5-methylglutamine modification is found at Gln-235. The segment at 283-309 (QKAESERSQARRSQVGSGDRSERIRTY) is disordered.

The protein belongs to the prokaryotic/mitochondrial release factor family. Post-translationally, methylated by PrmC. Methylation increases the termination efficiency of RF1.

Its subcellular location is the cytoplasm. In terms of biological role, peptide chain release factor 1 directs the termination of translation in response to the peptide chain termination codons UAG and UAA. This is Peptide chain release factor 1 from Brucella canis (strain ATCC 23365 / NCTC 10854 / RM-666).